Here is a 598-residue protein sequence, read N- to C-terminus: NADH-ubiquinone oxidoreductase chain 5 (598 aa).

14 consecutive transmembrane segments (helical) span residues 6–26 (LTLIMNSGALLTIIVLLPPII), 32–52 (MILTTKLVKISMFISLIPLTI), 84–100 (YTVIFTPIALMITWSIM), 113–133 (MDKFFKYLLLFLITMITFISA), 136–156 (LLQLFIGWEGVGIMSFLLISW), 241–261 (TPVSALLHSSTMVVAGVFLLI), 272–292 (LMLEMTLCLGAMTTICAALCA), 301–320 (IIAFSTSSQLGLMMVAVGLN), 325–347 (AFLHMCTHAFFKAMLFLCSGSII), 370–390 (TTCMTIGSAALMGLPFLAGFF), 409–429 (LMVTLMAVTLTTAYSSRLIIM), 456–476 (LAWGSLISGLILTSTLPPMKP), 478–498 (IFTMPTYIKTIALMMFIISLI), and 576–596 (LNSATLPLMAFALTLITLSLT).

It belongs to the complex I subunit 5 family.

The protein localises to the mitochondrion inner membrane. The enzyme catalyses a ubiquinone + NADH + 5 H(+)(in) = a ubiquinol + NAD(+) + 4 H(+)(out). Its function is as follows. Core subunit of the mitochondrial membrane respiratory chain NADH dehydrogenase (Complex I) that is believed to belong to the minimal assembly required for catalysis. Complex I functions in the transfer of electrons from NADH to the respiratory chain. The immediate electron acceptor for the enzyme is believed to be ubiquinone. The sequence is that of NADH-ubiquinone oxidoreductase chain 5 (MT-ND5) from Petromyzon marinus (Sea lamprey).